Reading from the N-terminus, the 193-residue chain is Protein B4 (193 aa).

The next 3 helical transmembrane spans lie at 15-35, 36-56, and 160-180; these read FFVC…CVFF, CVYF…VFFV, and LSLC…IVFS.

The protein localises to the host membrane. This chain is Protein B4 (B4), found in Homo sapiens (Human).